The primary structure comprises 278 residues: Probable endonuclease 4 (278 aa).

Residues H67, H107, E141, D173, H176, H210, D223, H225, and E255 each contribute to the Zn(2+) site.

The protein belongs to the AP endonuclease 2 family. Zn(2+) is required as a cofactor.

The enzyme catalyses Endonucleolytic cleavage to 5'-phosphooligonucleotide end-products.. Endonuclease IV plays a role in DNA repair. It cleaves phosphodiester bonds at apurinic or apyrimidinic (AP) sites, generating a 3'-hydroxyl group and a 5'-terminal sugar phosphate. The chain is Probable endonuclease 4 from Natronomonas pharaonis (strain ATCC 35678 / DSM 2160 / CIP 103997 / JCM 8858 / NBRC 14720 / NCIMB 2260 / Gabara) (Halobacterium pharaonis).